The following is a 99-amino-acid chain: Pterin-4-alpha-carbinolamine dehydratase (99 aa).

Belongs to the pterin-4-alpha-carbinolamine dehydratase family.

It catalyses the reaction (4aS,6R)-4a-hydroxy-L-erythro-5,6,7,8-tetrahydrobiopterin = (6R)-L-erythro-6,7-dihydrobiopterin + H2O. Functionally, involved in tetrahydrobiopterin biosynthesis. This chain is Pterin-4-alpha-carbinolamine dehydratase (pcbd), found in Dictyostelium discoideum (Social amoeba).